Consider the following 1213-residue polypeptide: DNA-directed RNA polymerase subunit beta (1213 aa).

Residues 1169-1213 are disordered; sequence SRMAEEQEKKKLAEETGKSGDKKENKKDADKPVAPADESDDKVSK. Basic and acidic residues predominate over residues 1171 to 1199; it reads MAEEQEKKKLAEETGKSGDKKENKKDADK.

The protein belongs to the RNA polymerase beta chain family. The RNAP catalytic core consists of 2 alpha, 1 beta, 1 beta' and 1 omega subunit. When a sigma factor is associated with the core the holoenzyme is formed, which can initiate transcription.

The enzyme catalyses RNA(n) + a ribonucleoside 5'-triphosphate = RNA(n+1) + diphosphate. In terms of biological role, DNA-dependent RNA polymerase catalyzes the transcription of DNA into RNA using the four ribonucleoside triphosphates as substrates. In Lactobacillus helveticus (strain DPC 4571), this protein is DNA-directed RNA polymerase subunit beta.